The following is an 89-amino-acid chain: uncharacterized protein (89 aa).

Residues 28–50 traverse the membrane as a helical segment; the sequence is LYLDLGFSALLFYNSNLLFSFIL.

It localises to the membrane. This is an uncharacterized protein from Archaeoglobus fulgidus (strain ATCC 49558 / DSM 4304 / JCM 9628 / NBRC 100126 / VC-16).